Reading from the N-terminus, the 180-residue chain is Putative 5'(3')-deoxyribonucleotidase (180 aa).

Asp-9 serves as the catalytic Nucleophile. Mg(2+) is bound by residues Asp-9, Asp-11, and Asp-135. Asp-11 (proton donor) is an active-site residue.

Belongs to the 5'(3')-deoxyribonucleotidase family. Mg(2+) serves as cofactor.

Its function is as follows. Dephosphorylates the 5' and 2'(3')-phosphates of deoxyribonucleotides. In Staphylococcus aureus (strain Mu50 / ATCC 700699), this protein is Putative 5'(3')-deoxyribonucleotidase.